A 121-amino-acid chain; its full sequence is Large ribosomal subunit protein uL18 (121 aa).

Belongs to the universal ribosomal protein uL18 family. In terms of assembly, part of the 50S ribosomal subunit; part of the 5S rRNA/L5/L18/L25 subcomplex. Contacts the 5S and 23S rRNAs.

Its function is as follows. This is one of the proteins that bind and probably mediate the attachment of the 5S RNA into the large ribosomal subunit, where it forms part of the central protuberance. This is Large ribosomal subunit protein uL18 from Delftia acidovorans (strain DSM 14801 / SPH-1).